The chain runs to 280 residues: Thylakoid lumenal protein TL20.3, chloroplastic (280 aa).

The N-terminal 59 residues, 1 to 59, are a transit peptide targeting the chloroplast; sequence MAFSSLSPLPMKSLDISRSSSSVSRSPYHFQRYLLRRLQLSSRSNLEIKDSSNTREGCC. The N-terminal 31 residues, 60–90, are a transit peptide targeting the thylakoid; sequence SSAESNTWKRILSAAMAAAVIASSSGVPAMA. Pentapeptide repeat domains lie at 124 to 163 and 169 to 208; these read ENFRRANFTSADMRESDFSGSTFNGAYLEKAVAYKANFSG and TLMDRMVLNEANLTNAVLVRSVLTRSDLGGAKIEGADFSD.

As to quaternary structure, interacts with thioredoxin. Interacts in vitro with LTO1.

The protein localises to the plastid. The protein resides in the chloroplast thylakoid lumen. Its function is as follows. Pentapeptide repeat protein of unknown function. Subject to degradation when reduced. The sequence is that of Thylakoid lumenal protein TL20.3, chloroplastic from Arabidopsis thaliana (Mouse-ear cress).